The chain runs to 91 residues: Late embryogenesis abundant protein EMB564 (91 aa).

Composition is skewed to basic and acidic residues over residues 1-19 and 32-51; these read MASG…REGE and EAQE…RREQ. The tract at residues 1–91 is disordered; the sequence is MASGQESRKE…VTIDESKFTK (91 aa).

Belongs to the small hydrophilic plant seed protein family.

Its function is as follows. LEA proteins are late embryonic proteins abundant in higher plant seed embryos. They may play an essential role in seed survival and in controlling water exchanges during seed desiccation and imbibition. This Zea mays (Maize) protein is Late embryogenesis abundant protein EMB564.